Consider the following 911-residue polypeptide: Isoleucine--tRNA ligase (911 aa).

A 'HIGH' region motif is present at residues 57 to 67 (PYANGDIHMGH). Residue glutamate 551 participates in L-isoleucyl-5'-AMP binding. Residues 592-596 (KMSKS) carry the 'KMSKS' region motif. ATP is bound at residue lysine 595. Residues cysteine 881, cysteine 884, cysteine 901, and cysteine 904 each contribute to the Zn(2+) site.

It belongs to the class-I aminoacyl-tRNA synthetase family. IleS type 1 subfamily. In terms of assembly, monomer. Zn(2+) is required as a cofactor.

It is found in the cytoplasm. It catalyses the reaction tRNA(Ile) + L-isoleucine + ATP = L-isoleucyl-tRNA(Ile) + AMP + diphosphate. Its function is as follows. Catalyzes the attachment of isoleucine to tRNA(Ile). As IleRS can inadvertently accommodate and process structurally similar amino acids such as valine, to avoid such errors it has two additional distinct tRNA(Ile)-dependent editing activities. One activity is designated as 'pretransfer' editing and involves the hydrolysis of activated Val-AMP. The other activity is designated 'posttransfer' editing and involves deacylation of mischarged Val-tRNA(Ile). This chain is Isoleucine--tRNA ligase, found in Exiguobacterium sibiricum (strain DSM 17290 / CCUG 55495 / CIP 109462 / JCM 13490 / 255-15).